A 123-amino-acid chain; its full sequence is Ribosome-binding factor A (123 aa).

The protein belongs to the RbfA family. Monomer. Binds 30S ribosomal subunits, but not 50S ribosomal subunits or 70S ribosomes.

The protein localises to the cytoplasm. One of several proteins that assist in the late maturation steps of the functional core of the 30S ribosomal subunit. Associates with free 30S ribosomal subunits (but not with 30S subunits that are part of 70S ribosomes or polysomes). Required for efficient processing of 16S rRNA. May interact with the 5'-terminal helix region of 16S rRNA. In Lactobacillus gasseri (strain ATCC 33323 / DSM 20243 / BCRC 14619 / CIP 102991 / JCM 1131 / KCTC 3163 / NCIMB 11718 / NCTC 13722 / AM63), this protein is Ribosome-binding factor A.